The primary structure comprises 49 residues: DNA-directed RNA polymerase subunit Rpo12 (49 aa).

Zn(2+) contacts are provided by Cys-11, Cys-27, and Cys-30.

This sequence belongs to the archaeal Rpo12/eukaryotic RPC10 RNA polymerase subunit family. Part of the RNA polymerase complex. The cofactor is Zn(2+).

The protein localises to the cytoplasm. It carries out the reaction RNA(n) + a ribonucleoside 5'-triphosphate = RNA(n+1) + diphosphate. Its function is as follows. DNA-dependent RNA polymerase (RNAP) catalyzes the transcription of DNA into RNA using the four ribonucleoside triphosphates as substrates. This is DNA-directed RNA polymerase subunit Rpo12 from Pyrococcus horikoshii (strain ATCC 700860 / DSM 12428 / JCM 9974 / NBRC 100139 / OT-3).